Reading from the N-terminus, the 474-residue chain is Gamma-aminobutyric acid receptor subunit beta-1 (474 aa).

An N-terminal signal peptide occupies residues 1 to 25; the sequence is MWTVQNRESLGLLSFPVMVAMVCCA. The Extracellular portion of the chain corresponds to 26–245; the sequence is HSSNEPSNMS…SFRLKRNIGY (220 aa). Residues Asn-33 and Asn-105 are each glycosylated (N-linked (GlcNAc...) asparagine). Histamine is bound at residue Tyr-122. The cysteines at positions 161 and 175 are disulfide-linked. Asn-174 is a glycosylation site (N-linked (GlcNAc...) asparagine). Residues 181-182 and Thr-227 each bind histamine; that span reads SY. 4-aminobutanoate contacts are provided by Tyr-182 and Thr-227. 3 helical membrane passes run 246-267, 271-293, and 305-327; these read FILQ…SFWI, ASAA…STHL, and AIDI…YAFV. At 328 to 451 the chain is on the cytoplasmic side; sequence NYIFFGKGPQ…DLTDVNSIDK (124 aa). A helical membrane pass occupies residues 452-473; it reads WSRMFFPITFSLFNVVYWLYYV.

This sequence belongs to the ligand-gated ion channel (TC 1.A.9) family. Gamma-aminobutyric acid receptor (TC 1.A.9.5) subfamily. GABRB1 sub-subfamily. As to quaternary structure, heteropentamer, formed by a combination of alpha (GABRA1-6), beta (GABRB1-3), gamma (GABRG1-3), delta (GABRD), epsilon (GABRE), rho (GABRR1-3), pi (GABRP) and theta (GABRQ) chains, each subunit exhibiting distinct physiological and pharmacological properties. Binds UBQLN1.

Its subcellular location is the postsynaptic cell membrane. The protein localises to the cell membrane. It catalyses the reaction chloride(in) = chloride(out). Potentiated by histamine. Beta subunit of the heteropentameric ligand-gated chloride channel gated by gamma-aminobutyric acid (GABA), a major inhibitory neurotransmitter in the brain. GABA-gated chloride channels, also named GABA(A) receptors (GABAAR), consist of five subunits arranged around a central pore and contain GABA active binding site(s) located at the alpha and beta subunit interface(s). When activated by GABA, GABAARs selectively allow the flow of chloride anions across the cell membrane down their electrochemical gradient. Chloride influx into the postsynaptic neuron following GABAAR opening decreases the neuron ability to generate a new action potential, thereby reducing nerve transmission. Beta-containing GABAARs can simultaneously bind GABA and histamine where histamine binds at the interface of two neighboring beta subunits, which may be involved in the regulation of sleep and wakefulness. The protein is Gamma-aminobutyric acid receptor subunit beta-1 of Mus musculus (Mouse).